The following is a 210-amino-acid chain: Probable peroxygenase 7 (210 aa).

The disordered stretch occupies residues 1 to 24 (MSHQTVALASKAKSPKPKRGKLDK). The 36-residue stretch at 25–60 (EKMTALEKHVSFFDRNKDGTVYPWETYQGFRALGTG) folds into the EF-hand domain. His-33 is a binding site for heme. Positions 38, 40, 42, 44, and 49 each coordinate Ca(2+). Positions 81–90 (PGKGFSPLFP) match the Proline-knot motif. Ser-188 is modified (phosphoserine).

The protein belongs to the caleosin family. As to quaternary structure, homodimer. Heme b serves as cofactor. Ca(2+) is required as a cofactor. Expressed in pollen coat.

The protein resides in the secreted. The enzyme catalyses RH + ROOH = ROH + ROH.. Probable calcium-binding peroxygenase. May be involved in pollination. This chain is Probable peroxygenase 7 (PXG7), found in Arabidopsis thaliana (Mouse-ear cress).